The primary structure comprises 493 residues: Reticulophagy regulator 1 (493 aa).

Positions 1-52 are disordered; sequence MASPAPPEPAEQGSPALAAAPQAPPPPTRAPPEEPEGAAPPEEGAAAGAGRQ. The Cytoplasmic segment spans residues 1–55; that stretch reads MASPAPPEPAEQGSPALAAAPQAPPPPTRAPPEEPEGAAPPEEGAAAGAGRQVEE. A compositionally biased stretch (low complexity) spans 37-52; the sequence is GAAPPEEGAAAGAGRQ. The helical transmembrane segment at 56–76 threads the bilayer; sequence AAGGVAAVVTWLLGEPALWLG. Over 77 to 87 the chain is Lumenal; the sequence is GRADELLSWKR. Residues 80–229 are reticulon homology domain; sequence DELLSWKRPL…LLCAFLCPLF (150 aa). A helical membrane pass occupies residues 88-108; sequence PLHSLLAFVGANLVFWFLALT. At 109 to 114 the chain is on the cytoplasmic side; sequence PWRVYH. A helical transmembrane segment spans residues 115-135; that stretch reads LISVMILTRVIMQIIKDMILS. The Lumenal portion of the chain corresponds to 136-204; that stretch reads RTRGAQLWRS…LVCSVCTFFT (69 aa). The residue at position 145 (Ser145) is a Phosphoserine. At Ser147 the chain carries Phosphoserine; by CAMK2B. Residue Ser149 is modified to Phosphoserine. The chain crosses the membrane as a helical span at residues 205 to 225; that stretch reads ILGSYIPGVILSYLLLLCAFL. The Cytoplasmic portion of the chain corresponds to 226 to 493; sequence CPLFKCNDIG…GFLSNLLGGH (268 aa). Residues 315–326 are compositionally biased toward polar residues; it reads FNLSEGYTPQTD. 2 disordered regions span residues 315–394 and 435–493; these read FNLS…GLSL and AAPS…LGGH. Basic and acidic residues predominate over residues 330–344; that stretch reads DLDRPSEEVFSRDLS. Residue Thr353 is modified to Phosphothreonine. Positions 368 to 388 are enriched in basic and acidic residues; that stretch reads ELKRKKEQLDGGPRRSTEKKS. Acidic residues predominate over residues 441-463; the sequence is EDTDTEEGDDFELLDQSELDQIE. Positions 449 to 454 match the LIR motif motif; that stretch reads DDFELL. Residues 467–486 are compositionally biased toward polar residues; sequence GLSQDQEAEAQQNKKSSGFL.

Belongs to the RETREG family. Homooligomer; oligomerization is enhanced following endoplasmic reticulum stress and is mediated by the reticulon homology domain. Interacts with ATG8 family modifier proteins MAP1LC3A, MAP1LC3B, GABARAP, GABARAPL1 and GABARAPL2. In terms of processing, phosphorylation at Ser-147 by CAMK2B enhances oligomerization and membrane scission and reticulophagy activity.

The protein localises to the golgi apparatus. It localises to the cis-Golgi network membrane. Its subcellular location is the endoplasmic reticulum membrane. Its function is as follows. Endoplasmic reticulum (ER)-anchored autophagy regulator which mediates ER delivery into lysosomes through sequestration into autophagosomes. Promotes membrane remodeling and ER scission via its membrane bending capacity and targets the fragments into autophagosomes via interaction with ATG8 family proteins. Active under basal conditions. Required for collagen quality control in a LIR motif-dependent manner. Required for long-term survival of nociceptive and autonomic ganglion neurons. The protein is Reticulophagy regulator 1 (RETREG1) of Bos taurus (Bovine).